The chain runs to 548 residues: Thermostable neutral protease NprT (548 aa).

Positions 1–25 (MNKRAMLGAIGLAFGLLAAPIGASA) are cleaved as a signal peptide. A propeptide spans 26-229 (KGESIVWNEQ…DSRQPGGGQP (204 aa)) (activation peptide). 4 residues coordinate Ca(2+): Asp289, Asp291, Gln293, and Asp370. His374 contacts Zn(2+). Glu375 is a catalytic residue. Zn(2+)-binding residues include His378 and Glu398. 9 residues coordinate Ca(2+): Glu409, Asn415, Asp417, Glu419, Glu422, Tyr425, Thr426, Val429, and Asp432. His463 (proton donor) is an active-site residue.

This sequence belongs to the peptidase M4 family. It depends on Ca(2+) as a cofactor. Zn(2+) is required as a cofactor.

It is found in the secreted. With respect to regulation, its casein hydrolytic activity is inhibited almost completely by a chelating agent (EDTA), whereas neither diisopropyl fluorophosphate nor phenylmethylsulfonyl fluoride inhibit the proteolytic activity in vitro. Extracellular zinc metalloprotease. The protein is Thermostable neutral protease NprT (nprT) of Geobacillus stearothermophilus (Bacillus stearothermophilus).